The following is a 218-amino-acid chain: Structural protein V19 (218 aa).

The protein localises to the virion. The protein is Structural protein V19 of Sputnik virophage.